The chain runs to 342 residues: Methylthioribose-1-phosphate isomerase (342 aa).

Substrate is bound by residues 49-51, Arg-86, and Gln-187; that span reads RGA. The Proton donor role is filled by Asp-228. 238–239 provides a ligand contact to substrate; that stretch reads NK.

It belongs to the eIF-2B alpha/beta/delta subunits family. MtnA subfamily.

The catalysed reaction is 5-(methylsulfanyl)-alpha-D-ribose 1-phosphate = 5-(methylsulfanyl)-D-ribulose 1-phosphate. It functions in the pathway amino-acid biosynthesis; L-methionine biosynthesis via salvage pathway; L-methionine from S-methyl-5-thio-alpha-D-ribose 1-phosphate: step 1/6. Functionally, catalyzes the interconversion of methylthioribose-1-phosphate (MTR-1-P) into methylthioribulose-1-phosphate (MTRu-1-P). The chain is Methylthioribose-1-phosphate isomerase from Klebsiella pneumoniae subsp. pneumoniae (strain ATCC 700721 / MGH 78578).